Here is a 74-residue protein sequence, read N- to C-terminus: Translation initiation factor IF-1, chloroplastic (74 aa).

The S1-like domain occupies 1–72 (MEKQNIIEME…TKGRITYRLR (72 aa)).

This sequence belongs to the IF-1 family. As to quaternary structure, component of the 30S ribosomal translation pre-initiation complex which assembles on the 30S ribosome in the order IF-2 and IF-3, IF-1 and N-formylmethionyl-tRNA(fMet); mRNA recruitment can occur at any time during PIC assembly.

It is found in the plastid. The protein resides in the chloroplast. One of the essential components for the initiation of protein synthesis. Stabilizes the binding of IF-2 and IF-3 on the 30S subunit to which N-formylmethionyl-tRNA(fMet) subsequently binds. Helps modulate mRNA selection, yielding the 30S pre-initiation complex (PIC). Upon addition of the 50S ribosomal subunit IF-1, IF-2 and IF-3 are released leaving the mature 70S translation initiation complex. In Chlorokybus atmophyticus (Soil alga), this protein is Translation initiation factor IF-1, chloroplastic.